The chain runs to 506 residues: Proline--tRNA ligase (506 aa).

This sequence belongs to the class-II aminoacyl-tRNA synthetase family. ProS type 3 subfamily. Homodimer.

It is found in the cytoplasm. The enzyme catalyses tRNA(Pro) + L-proline + ATP = L-prolyl-tRNA(Pro) + AMP + diphosphate. Functionally, catalyzes the attachment of proline to tRNA(Pro) in a two-step reaction: proline is first activated by ATP to form Pro-AMP and then transferred to the acceptor end of tRNA(Pro). This is Proline--tRNA ligase from Akkermansia muciniphila (strain ATCC BAA-835 / DSM 22959 / JCM 33894 / BCRC 81048 / CCUG 64013 / CIP 107961 / Muc).